The primary structure comprises 181 residues: ATP synthase subunit b (181 aa).

A helical membrane pass occupies residues 24–44 (LFPNLPNFIAHLLATIILVIV).

Belongs to the ATPase B chain family. In terms of assembly, F-type ATPases have 2 components, F(1) - the catalytic core - and F(0) - the membrane proton channel. F(1) has five subunits: alpha(3), beta(3), gamma(1), delta(1), epsilon(1). F(0) has three main subunits: a(1), b(2) and c(10-14). The alpha and beta chains form an alternating ring which encloses part of the gamma chain. F(1) is attached to F(0) by a central stalk formed by the gamma and epsilon chains, while a peripheral stalk is formed by the delta and b chains.

It localises to the cell membrane. Functionally, f(1)F(0) ATP synthase produces ATP from ADP in the presence of a proton or sodium gradient. F-type ATPases consist of two structural domains, F(1) containing the extramembraneous catalytic core and F(0) containing the membrane proton channel, linked together by a central stalk and a peripheral stalk. During catalysis, ATP synthesis in the catalytic domain of F(1) is coupled via a rotary mechanism of the central stalk subunits to proton translocation. Component of the F(0) channel, it forms part of the peripheral stalk, linking F(1) to F(0). The sequence is that of ATP synthase subunit b from Mycoplasma mycoides subsp. mycoides SC (strain CCUG 32753 / NCTC 10114 / PG1).